Here is a 189-residue protein sequence, read N- to C-terminus: Interferon alpha-F (189 aa).

An N-terminal signal peptide occupies residues methionine 1–glycine 23. Cystine bridges form between cysteine 24/cysteine 122 and cysteine 52/cysteine 162.

The protein belongs to the alpha/beta interferon family.

The protein resides in the secreted. Functionally, produced by macrophages, IFN-alpha have antiviral activities. Interferon stimulates the production of two enzymes: a protein kinase and an oligoadenylate synthetase. This chain is Interferon alpha-F (IFNAF), found in Bos taurus (Bovine).